The following is a 298-amino-acid chain: MDKNIIIGAMTALITPFKNGKVDEQSYARLIKRQIENGIDAVVPVGTTGESATLTHEEHRTCIEIAVETCKGTKVKVLAGAGSNATHEAVGLAKFAKEHGADGILSVAPYYNKPTQQGLYEHYKAIAQSVDIPVLLYNVPGRTGCEISTDTIIKLFRDCENIYGVKEASGNIDKCVDLLAHEPRMMLISGEDAINYPILSNGGKGVISVTSNLLPDMISALTHFALDENYKEAKKINDELYNINKILFCESNPIPIKTAMYLAGLIESLEFRLPLCSPSKENFAKIEEVMKKYKIKGF.

Residue T48 coordinates pyruvate. Y137 acts as the Proton donor/acceptor in catalysis. K166 functions as the Schiff-base intermediate with substrate in the catalytic mechanism. Pyruvate is bound at residue I207.

This sequence belongs to the DapA family. Homotetramer; dimer of dimers.

It localises to the cytoplasm. It carries out the reaction L-aspartate 4-semialdehyde + pyruvate = (2S,4S)-4-hydroxy-2,3,4,5-tetrahydrodipicolinate + H2O + H(+). The protein operates within amino-acid biosynthesis; L-lysine biosynthesis via DAP pathway; (S)-tetrahydrodipicolinate from L-aspartate: step 3/4. In terms of biological role, catalyzes the condensation of (S)-aspartate-beta-semialdehyde [(S)-ASA] and pyruvate to 4-hydroxy-tetrahydrodipicolinate (HTPA). The protein is 4-hydroxy-tetrahydrodipicolinate synthase of Campylobacter jejuni subsp. jejuni serotype O:2 (strain ATCC 700819 / NCTC 11168).